Consider the following 311-residue polypeptide: Malate dehydrogenase (311 aa).

Residues 7–13 (GAAGGIG) and aspartate 34 each bind NAD(+). Substrate contacts are provided by arginine 81 and arginine 87. Residues asparagine 94 and 117–119 (ITN) each bind NAD(+). Asparagine 119 and arginine 153 together coordinate substrate. Residue histidine 177 is the Proton acceptor of the active site. Methionine 227 lines the NAD(+) pocket.

Belongs to the LDH/MDH superfamily. MDH type 1 family. As to quaternary structure, homodimer.

The catalysed reaction is (S)-malate + NAD(+) = oxaloacetate + NADH + H(+). Functionally, catalyzes the reversible oxidation of malate to oxaloacetate. This Shewanella sediminis (strain HAW-EB3) protein is Malate dehydrogenase.